Reading from the N-terminus, the 568-residue chain is ATP-dependent RNA helicase MRH4, mitochondrial (568 aa).

A mitochondrion-targeting transit peptide spans 1–50; that stretch reads MVSILAIRTFNPLGHFVSTQCVRAYAINSVRAGSKSSSVRAGSKNDTTRA. Over residues 36 to 49 the composition is skewed to polar residues; it reads SSSVRAGSKNDTTR. The segment at 36 to 64 is disordered; the sequence is SSSVRAGSKNDTTRASSKKNKAGKSKLQL. The Q motif motif lies at 143 to 150; the sequence is EIHPSPIQ. The 189-residue stretch at 160 to 348 folds into the Helicase ATP-binding domain; it reads NLMEPKLQVH…TKMFPNAIPL (189 aa). 173–180 lines the ATP pocket; it reads AETGSGKT. Positions 296-299 match the DEAD box motif; sequence DEAD. The Helicase C-terminal domain maps to 379–568; that stretch reads ALAQTLYAIA…TILKKNKALT (190 aa).

It belongs to the DEAD box helicase family. MRH4 subfamily.

The protein resides in the mitochondrion. It carries out the reaction ATP + H2O = ADP + phosphate + H(+). ATP-binding RNA helicase involved in mitochondrial RNA metabolism. Required for maintenance of mitochondrial DNA. This Candida glabrata (strain ATCC 2001 / BCRC 20586 / JCM 3761 / NBRC 0622 / NRRL Y-65 / CBS 138) (Yeast) protein is ATP-dependent RNA helicase MRH4, mitochondrial (MRH4).